Reading from the N-terminus, the 236-residue chain is tRNA (guanine-N(1)-)-methyltransferase (236 aa).

Residues Gly110 and 129-134 contribute to the S-adenosyl-L-methionine site; that span reads LGDFVL.

The protein belongs to the RNA methyltransferase TrmD family. Homodimer.

It is found in the cytoplasm. The catalysed reaction is guanosine(37) in tRNA + S-adenosyl-L-methionine = N(1)-methylguanosine(37) in tRNA + S-adenosyl-L-homocysteine + H(+). Its function is as follows. Specifically methylates guanosine-37 in various tRNAs. The sequence is that of tRNA (guanine-N(1)-)-methyltransferase from Clostridium perfringens (strain SM101 / Type A).